A 341-amino-acid chain; its full sequence is 4-hydroxy-2-oxovalerate aldolase (341 aa).

Residues 5-257 (ITLHDMTLRD…ETGVDVFRIA (253 aa)) form the Pyruvate carboxyltransferase domain. Residue 13–14 (RD) participates in substrate binding. A Mn(2+)-binding site is contributed by Asp14. The Proton acceptor role is filled by His17. Positions 167 and 196 each coordinate substrate. Mn(2+) is bound by residues His196 and His198. Tyr287 contacts substrate.

The protein belongs to the 4-hydroxy-2-oxovalerate aldolase family.

The enzyme catalyses (S)-4-hydroxy-2-oxopentanoate = acetaldehyde + pyruvate. The polypeptide is 4-hydroxy-2-oxovalerate aldolase (mhpE) (Cupriavidus taiwanensis (strain DSM 17343 / BCRC 17206 / CCUG 44338 / CIP 107171 / LMG 19424 / R1) (Ralstonia taiwanensis (strain LMG 19424))).